We begin with the raw amino-acid sequence, 90 residues long: Small ribosomal subunit protein uS19 (90 aa).

Belongs to the universal ribosomal protein uS19 family.

Functionally, protein S19 forms a complex with S13 that binds strongly to the 16S ribosomal RNA. The protein is Small ribosomal subunit protein uS19 of Thioalkalivibrio sulfidiphilus (strain HL-EbGR7).